The primary structure comprises 384 residues: Alanine racemase (384 aa).

The Proton acceptor; specific for D-alanine role is filled by lysine 39. Lysine 39 is subject to N6-(pyridoxal phosphate)lysine. Position 138 (arginine 138) interacts with substrate. Tyrosine 265 acts as the Proton acceptor; specific for L-alanine in catalysis. Methionine 312 provides a ligand contact to substrate.

It belongs to the alanine racemase family. The cofactor is pyridoxal 5'-phosphate.

The enzyme catalyses L-alanine = D-alanine. It participates in amino-acid biosynthesis; D-alanine biosynthesis; D-alanine from L-alanine: step 1/1. In terms of biological role, catalyzes the interconversion of L-alanine and D-alanine. May also act on other amino acids. The polypeptide is Alanine racemase (alr) (Staphylococcus carnosus (strain TM300)).